Reading from the N-terminus, the 393-residue chain is Cytochrome b (393 aa).

The next 4 helical transmembrane spans lie at 33-53 (FGSL…FLAM), 77-98 (WFLR…YLHM), 113-133 (WNIG…GYVL), and 178-198 (FFAI…LHLL). Residues His83 and His97 each contribute to the heme b site. The heme b site is built by His182 and His196. His201 is an a ubiquinone binding site. The next 4 helical transmembrane spans lie at 226–246 (YKDV…ALFA), 288–308 (LGGV…PFIH), 320–340 (LSQL…WIGG), and 347–367 (FIII…ILMP).

Belongs to the cytochrome b family. As to quaternary structure, the cytochrome bc1 complex contains 3 respiratory subunits (MT-CYB, CYC1 and UQCRFS1), 2 core proteins (UQCRC1 and UQCRC2) and probably 6 low-molecular weight proteins. Heme b serves as cofactor.

Its subcellular location is the mitochondrion inner membrane. In terms of biological role, component of the ubiquinol-cytochrome c reductase complex (complex III or cytochrome b-c1 complex) that is part of the mitochondrial respiratory chain. The b-c1 complex mediates electron transfer from ubiquinol to cytochrome c. Contributes to the generation of a proton gradient across the mitochondrial membrane that is then used for ATP synthesis. This Synbranchus marmoratus (Marbled swamp eel) protein is Cytochrome b (mt-cyb).